Reading from the N-terminus, the 1369-residue chain is DNA-directed RNA polymerase subunit beta' (1369 aa).

Positions 1–26 (MTSSSPKTRKSSTKSKAKRGSKSKKA) are disordered. Over residues 7 to 24 (KTRKSSTKSKAKRGSKSK) the composition is skewed to basic residues. 4 residues coordinate Zn(2+): Cys-253, Cys-320, Cys-327, and Cys-330. Residues 1294–1369 (TVDMPSSPVA…LQEEGLLSDE (76 aa)) are disordered. A compositionally biased stretch (acidic residues) spans 1342 to 1351 (DDELSAEDQM). Low complexity predominate over residues 1357 to 1369 (LEGLQEEGLLSDE).

This sequence belongs to the RNA polymerase beta' chain family. RpoC2 subfamily. As to quaternary structure, in cyanobacteria the RNAP catalytic core is composed of 2 alpha, 1 beta, 1 beta', 1 gamma and 1 omega subunit. When a sigma factor is associated with the core the holoenzyme is formed, which can initiate transcription. Zn(2+) is required as a cofactor.

The catalysed reaction is RNA(n) + a ribonucleoside 5'-triphosphate = RNA(n+1) + diphosphate. Its function is as follows. DNA-dependent RNA polymerase catalyzes the transcription of DNA into RNA using the four ribonucleoside triphosphates as substrates. This Prochlorococcus marinus (strain NATL2A) protein is DNA-directed RNA polymerase subunit beta'.